The chain runs to 130 residues: Small ribosomal subunit protein uS9 (130 aa).

Belongs to the universal ribosomal protein uS9 family.

In Serratia proteamaculans (strain 568), this protein is Small ribosomal subunit protein uS9.